Reading from the N-terminus, the 524-residue chain is Alkaline phosphatase, tissue-nonspecific isozyme (524 aa).

The N-terminal stretch at 1–17 (MISPFLVLAIGTCLTNS) is a signal peptide. Residue D60 participates in Mg(2+) binding. Zn(2+) is bound by residues D60 and S110. The Phosphoserine intermediate role is filled by S110. A Phosphoserine modification is found at S110. Cysteines 139 and 201 form a disulfide. N-linked (GlcNAc...) asparagine glycosylation occurs at N140. A Mg(2+)-binding site is contributed by T173. N-linked (GlcNAc...) asparagine glycosylation occurs at N230. A Ca(2+)-binding site is contributed by E235. N-linked (GlcNAc...) asparagine glycosylation occurs at N271. Ca(2+) is bound by residues F290 and E291. An N-linked (GlcNAc...) asparagine glycan is attached at N303. D306 contacts Ca(2+). E332 contributes to the Mg(2+) binding site. Zn(2+) contacts are provided by D337, H341, D378, and H379. N430 carries an N-linked (GlcNAc...) asparagine glycan. H454 is a binding site for Zn(2+). C489 and C497 are disulfide-bonded. A lipid anchor (GPI-anchor amidated glycine) is attached at G501. A propeptide spans 502 to 524 (SGSAPSPGALLLPLAVLSLRTLF) (removed in mature form).

The protein belongs to the alkaline phosphatase family. In terms of assembly, homodimer. The cofactor is Mg(2+). Zn(2+) serves as cofactor. It depends on Ca(2+) as a cofactor. In terms of processing, N-glycosylated. As to expression, widely expressed. Expressed in DRG neurons and spinal cord neurons.

Its subcellular location is the cell membrane. It localises to the extracellular vesicle membrane. It is found in the mitochondrion membrane. The protein localises to the mitochondrion intermembrane space. It carries out the reaction a phosphate monoester + H2O = an alcohol + phosphate. It catalyses the reaction diphosphate + H2O = 2 phosphate + H(+). The enzyme catalyses pyridoxal 5'-phosphate + H2O = pyridoxal + phosphate. The catalysed reaction is phosphoethanolamine + H2O = ethanolamine + phosphate. It carries out the reaction N-phosphocreatine + H2O = creatine + phosphate. It catalyses the reaction ATP + H2O = ADP + phosphate + H(+). The enzyme catalyses ADP + H2O = AMP + phosphate + H(+). The catalysed reaction is AMP + H2O = adenosine + phosphate. With respect to regulation, phosphatase activity is specifically inhibited by 5-((5-chloro-2-methoxyphenyl)sulfonamido)nicotinamide (SBI-425). Its function is as follows. Alkaline phosphatase that metabolizes various phosphate compounds and plays a key role in skeletal mineralization and adaptive thermogenesis. Has broad substrate specificity and can hydrolyze a considerable variety of compounds: however, only a few substrates, such as diphosphate (inorganic pyrophosphate; PPi), pyridoxal 5'-phosphate (PLP) and N-phosphocreatine are natural substrates. Plays an essential role in skeletal and dental mineralization via its ability to hydrolyze extracellular diphosphate, a potent mineralization inhibitor, to phosphate: it thereby promotes hydroxyapatite crystal formation and increases inorganic phosphate concentration. Acts in a non-redundant manner with PHOSPHO1 in skeletal mineralization: while PHOSPHO1 mediates the initiation of hydroxyapatite crystallization in the matrix vesicles (MVs), ALPL/TNAP catalyzes the spread of hydroxyapatite crystallization in the extracellular matrix. Also promotes dephosphorylation of osteopontin (SSP1), an inhibitor of hydroxyapatite crystallization in its phosphorylated state; it is however unclear whether ALPL/TNAP mediates SSP1 dephosphorylation via a direct or indirect manner. Catalyzes dephosphorylation of PLP to pyridoxal (PL), the transportable form of vitamin B6, in order to provide a sufficient amount of PLP in the brain, an essential cofactor for enzymes catalyzing the synthesis of diverse neurotransmitters. Additionally, also able to mediate ATP degradation in a stepwise manner to adenosine, thereby regulating the availability of ligands for purinergic receptors. Also capable of dephosphorylating microbial products, such as lipopolysaccharides (LPS) as well as other phosphorylated small-molecules, such as poly-inosine:cytosine (poly I:C). Acts as a key regulator of adaptive thermogenesis as part of the futile creatine cycle: localizes to the mitochondria of thermogenic fat cells and acts by mediating hydrolysis of N-phosphocreatine to initiate a futile cycle of creatine dephosphorylation and phosphorylation. During the futile creatine cycle, creatine and N-phosphocreatine are in a futile cycle, which dissipates the high energy charge of N-phosphocreatine as heat without performing any mechanical or chemical work. The sequence is that of Alkaline phosphatase, tissue-nonspecific isozyme from Mus musculus (Mouse).